We begin with the raw amino-acid sequence, 169 residues long: Lipoprotein signal peptidase (169 aa).

A run of 3 helical transmembrane segments spans residues 12 to 32 (WLWLVVVVLVLDFASKQWILG), 70 to 90 (WFFAGIAVAIVAVLLVMMYRS), and 102 to 122 (AFIIGGALGNLFDRLWHGFVV). Catalysis depends on residues Asp-123 and Asp-141. The helical transmembrane segment at 137-157 (FNLADSFICVGAAMIVLEGFL) threads the bilayer.

It belongs to the peptidase A8 family.

It is found in the cell inner membrane. The enzyme catalyses Release of signal peptides from bacterial membrane prolipoproteins. Hydrolyzes -Xaa-Yaa-Zaa-|-(S,diacylglyceryl)Cys-, in which Xaa is hydrophobic (preferably Leu), and Yaa (Ala or Ser) and Zaa (Gly or Ala) have small, neutral side chains.. Its pathway is protein modification; lipoprotein biosynthesis (signal peptide cleavage). This protein specifically catalyzes the removal of signal peptides from prolipoproteins. The chain is Lipoprotein signal peptidase from Serratia proteamaculans (strain 568).